Reading from the N-terminus, the 119-residue chain is Large ribosomal subunit protein uL22 (119 aa).

It belongs to the universal ribosomal protein uL22 family. As to quaternary structure, part of the 50S ribosomal subunit.

In terms of biological role, this protein binds specifically to 23S rRNA; its binding is stimulated by other ribosomal proteins, e.g. L4, L17, and L20. It is important during the early stages of 50S assembly. It makes multiple contacts with different domains of the 23S rRNA in the assembled 50S subunit and ribosome. Functionally, the globular domain of the protein is located near the polypeptide exit tunnel on the outside of the subunit, while an extended beta-hairpin is found that lines the wall of the exit tunnel in the center of the 70S ribosome. In Pelodictyon phaeoclathratiforme (strain DSM 5477 / BU-1), this protein is Large ribosomal subunit protein uL22.